Here is a 577-residue protein sequence, read N- to C-terminus: Arginine--tRNA ligase (577 aa).

The 'HIGH' region motif lies at 132-142 (ANPTGPLHVGH).

It belongs to the class-I aminoacyl-tRNA synthetase family. Monomer.

The protein resides in the cytoplasm. The catalysed reaction is tRNA(Arg) + L-arginine + ATP = L-arginyl-tRNA(Arg) + AMP + diphosphate. The sequence is that of Arginine--tRNA ligase from Pelagibacter ubique (strain HTCC1062).